Reading from the N-terminus, the 406-residue chain is Elongation factor Ts, mitochondrial (406 aa).

Positions 387 to 406 (ARPSDETSFADQVKEAAGLA) are disordered.

The protein belongs to the EF-Ts family.

The protein resides in the mitochondrion. Associates with the EF-Tu.GDP complex and induces the exchange of GDP to GTP. It remains bound to the aminoacyl-tRNA.EF-Tu.GTP complex up to the GTP hydrolysis stage on the ribosome. The sequence is that of Elongation factor Ts, mitochondrial from Malassezia globosa (strain ATCC MYA-4612 / CBS 7966) (Dandruff-associated fungus).